We begin with the raw amino-acid sequence, 167 residues long: Mediator of RNA polymerase II transcription subunit 10 (167 aa).

The disordered stretch occupies residues 54 to 92; it reads STHTKPHPPPPPPPQPTDPTTAAAPALRDNPDPPLSSIQ. Residues 60-70 are compositionally biased toward pro residues; sequence HPPPPPPPQPT.

This sequence belongs to the Mediator complex subunit 10 family. Component of the Mediator complex.

The protein resides in the nucleus. Its function is as follows. Component of the Mediator complex, a coactivator involved in the regulated transcription of nearly all RNA polymerase II-dependent genes. Mediator functions as a bridge to convey information from gene-specific regulatory proteins to the basal RNA polymerase II transcription machinery. Mediator is recruited to promoters by direct interactions with regulatory proteins and serves as a scaffold for the assembly of a functional preinitiation complex with RNA polymerase II and the general transcription factors. The protein is Mediator of RNA polymerase II transcription subunit 10 (nut2) of Aspergillus clavatus (strain ATCC 1007 / CBS 513.65 / DSM 816 / NCTC 3887 / NRRL 1 / QM 1276 / 107).